Here is a 278-residue protein sequence, read N- to C-terminus: Shikimate dehydrogenase (NADP(+)) (278 aa).

Residues 19-21 and Thr66 each bind shikimate; that span reads SRS. Lys70 (proton acceptor) is an active-site residue. Positions 91 and 106 each coordinate shikimate. NADP(+) contacts are provided by residues 129–133 and Phe221; that span reads GAGGA. Residue Tyr223 participates in shikimate binding. Residue Gly242 coordinates NADP(+).

It belongs to the shikimate dehydrogenase family. Homodimer.

The enzyme catalyses shikimate + NADP(+) = 3-dehydroshikimate + NADPH + H(+). Its pathway is metabolic intermediate biosynthesis; chorismate biosynthesis; chorismate from D-erythrose 4-phosphate and phosphoenolpyruvate: step 4/7. Its function is as follows. Involved in the biosynthesis of the chorismate, which leads to the biosynthesis of aromatic amino acids. Catalyzes the reversible NADPH linked reduction of 3-dehydroshikimate (DHSA) to yield shikimate (SA). The protein is Shikimate dehydrogenase (NADP(+)) of Anaeromyxobacter dehalogenans (strain 2CP-1 / ATCC BAA-258).